We begin with the raw amino-acid sequence, 677 residues long: Platelet glycoprotein Ib alpha chain (677 aa).

The first 16 residues, 1–16, serve as a signal peptide directing secretion; it reads MHLLLWLLLLARLCRP. Positions 17–47 constitute an LRRNT domain; sequence EFICEVSKVTSQVEVNCDNKGLKALPPGLPG. Over 17 to 564 the chain is Extracellular; the sequence is EFICEVSKVT…NPDLCCLLPL (548 aa). Cysteine 20 and cysteine 33 form a disulfide bridge. LRR repeat units follow at residues 72–93, 94–115, 117–138, 141–162, 165–186, and 189–210; these read RLAQ…GMLP, RLET…GRAL, ALTT…TLDG, HLHE…LLAP, QLRK…FLEG, and ELDT…FFGD. The 62-residue stretch at 221 to 282 folds into the LRRCT domain; the sequence is NPWSCDCEIL…HTYQGKDCPS (62 aa). Cystine bridges form between cysteine 225-cysteine 264 and cysteine 227-cysteine 280. Sulfotyrosine occurs at positions 291 and 294. O-linked (GalNAc...) threonine glycans are attached at residues threonine 309, threonine 319, threonine 323, threonine 324, threonine 346, threonine 354, threonine 368, threonine 372, threonine 376, threonine 377, and threonine 399. Positions 359-499 are disordered; it reads TLGPIMPTTT…EPTTTPTSPT (141 aa). Low complexity-rich tracts occupy residues 362 to 385, 393 to 403, 411 to 421, and 427 to 470; these read PIMP…TTPT, PTTLEPTTTPI, and TPST…TPTI. Over residues 471–485 the composition is skewed to pro residues; the sequence is PELPTPPTTPEPTMP. Residues 486–499 are compositionally biased toward low complexity; the sequence is PTTLEPTTTPTSPT. A glycan (O-linked (GalNAc...) threonine) is linked at threonine 487. Serine 497 is a glycosylation site (O-linked (GalNAc...) serine). Threonine 500 is a glycosylation site (O-linked (GalNAc...) threonine). O-linked (GalNAc...) serine glycosylation occurs at serine 523. Residues 565–585 traverse the membrane as a helical segment; it reads GFYILGLLWLLFASVVLILLL. The Cytoplasmic portion of the chain corresponds to 586–677; the sequence is TWAQHVKPQA…VGVRYSSHSL (92 aa). Residues serine 654 and serine 657 each carry the phosphoserine modification.

In terms of assembly, two GP-Ib beta are disulfide-linked to one GP-Ib alpha. GP-IX is complexed with the GP-Ib heterodimer via a non covalent linkage. Interacts with FLNB. Interacts with FLNA (via filamin repeats 4, 9, 12, 17, 19, 21, and 23). In terms of processing, O-glycosylated. Post-translationally, glycocalicin is the product of a proteolytic cleavage/shedding, catalyzed by ADAM17, which releases most of the extracellular domain. Binding sites for vWF and thrombin are in this part of the protein.

The protein localises to the membrane. Its function is as follows. GP-Ib, a surface membrane protein of platelets, participates in the formation of platelet plugs by binding to the A1 domain of vWF, which is already bound to the subendothelium. In Canis lupus familiaris (Dog), this protein is Platelet glycoprotein Ib alpha chain (GP1BA).